The sequence spans 428 residues: Glutamate-1-semialdehyde 2,1-aminomutase (428 aa).

Lys265 carries the post-translational modification N6-(pyridoxal phosphate)lysine.

Belongs to the class-III pyridoxal-phosphate-dependent aminotransferase family. HemL subfamily. Homodimer. It depends on pyridoxal 5'-phosphate as a cofactor.

The protein localises to the cytoplasm. The enzyme catalyses (S)-4-amino-5-oxopentanoate = 5-aminolevulinate. The protein operates within porphyrin-containing compound metabolism; protoporphyrin-IX biosynthesis; 5-aminolevulinate from L-glutamyl-tRNA(Glu): step 2/2. The chain is Glutamate-1-semialdehyde 2,1-aminomutase from Shewanella frigidimarina (strain NCIMB 400).